We begin with the raw amino-acid sequence, 333 residues long: Perchlorate reductase subunit beta (333 aa).

In terms of domain architecture, 4Fe-4S ferredoxin-type 1 spans 12–40; sequence LTYVTDLNKCIGCQTCTVACKKLWTTGPG. 4 residues coordinate [4Fe-4S] cluster: Cys21, Cys24, Cys27, and Cys31. The disordered stretch occupies residues 101 to 121; the sequence is KERVRPSPTPRSAPNWDEDQG. 4Fe-4S ferredoxin-type domains lie at 128–159 and 161–190; these read NSFFYLPRMCNHCTKPACLEACPNEAIYKREQ and GIVVIHQDKCKGAQACVQSCPYAKPYFNPV. Positions 137, 140, and 145 each coordinate [4Fe-4S] cluster. Cys149, Cys170, and Cys176 together coordinate [3Fe-4S] cluster. [4Fe-4S] cluster-binding residues include Cys180, Cys197, Cys200, Cys212, and Cys216.

Heterotrimer of alpha, beta and gamma subunits. Requires [3Fe-4S] cluster as cofactor. [4Fe-4S] cluster is required as a cofactor.

The protein localises to the periplasm. Functionally, component of the perchlorate reductase that catalyzes the reduction of perchlorate to chlorite and allows anaerobic growth on perchlorate as the sole electron acceptor. The beta subunit may be responsible for electron transfer to the catalytic alpha subunit PcrA. The chain is Perchlorate reductase subunit beta (pcrB) from Dechloromonas aromatica (strain RCB).